We begin with the raw amino-acid sequence, 494 residues long: Cytochrome P450 monooxygenase ccsD (494 aa).

The helical transmembrane segment at 5–25 (ISPRTLVLLAVTCSLLVLYFS) threads the bilayer. Cys438 provides a ligand contact to heme. Asn445 and Asn477 each carry an N-linked (GlcNAc...) asparagine glycan.

Belongs to the cytochrome P450 family. Heme is required as a cofactor.

It is found in the membrane. Its pathway is mycotoxin biosynthesis. Its function is as follows. Cytochrome P450 monooxygenase; part of the gene cluster that mediates the biosynthesis of a family of the mycotoxins cytochalasins E and K. The hybrid PKS-NRPS synthetase ccsA and the enoyl reductase ccsC are responsible for fusion of phenylalanine with an octaketide backbone and subsequent release of the stable tetramic acid precursor. The polyketide synthase module (PKS) of the PKS-NRPS ccsA is responsible for the synthesis of the octaketide backbone. The downstream nonribosomal peptide synthetase (NRPS) amidates the carboxyl end of the octaketide with a phenylalanine. A reductase-like domain (R) at the C-terminus catalyzes the reductive release of the polyketide-amino acid intermediate. Because ccsA lacks a designated enoylreductase (ER) domain, the required activity is provided the enoyl reductase ccsC. Upon formation of the 11-membered carbocycle-fused perhydroisoindolone intermediate, a number of oxidative steps are required to afford the final cytochalasin E and K, including two hydroxylations at C17 and C18, one alcohol oxidation at C17, one epoxidation at C6 and C7 and two Baeyer-Villiger oxidations. The oxidative modification at C17, C18 and the C6-C7 epoxidation are likely to be catalyzed by the two cytochrome P450 oxygenases ccsD and ccsG. CcsD may be responsible for the epoxidation of the C6-C7 double bond. CcsG may be responsible for the successive oxidative modifications at C17 and C18. The double Baeyer-Villiger oxidations of ketocytochalasin to precytochalasin and cytochalasin Z(16) are among the final steps leading to cytochalasin E and K and are catalyzed by ccsB. The first oxygen insertion step follows that of the classic BVMO mechanism, generating the ester precytochalasin. Release of precytochalasin into an aqueous environment can generate the shunt product iso-precytochalasin through spontaneous isomerization. Alternatively, precytochalasin can undergo further oxidation by ccsB to yield the in-line carbonate-containing cytochalasin Z(16). Cytochalasin Z(16) is a precursor to cytochalasin E and cytochalasin K, whereas iso-precytochalasin is a precursor to cytochalasin Z(17) and rosellichalasin. The hydrolyase ccsE may catalyze hydrolysis of epoxide bond in cytochalasin E to afford cytochalasin K. The function of ccsF has not been assigned but it may play a role in post-PKS-NRPS biosynthetic step, resistance or transport of cytochalasins and related PKS-NRPS products. The chain is Cytochrome P450 monooxygenase ccsD from Aspergillus clavatus (strain ATCC 1007 / CBS 513.65 / DSM 816 / NCTC 3887 / NRRL 1 / QM 1276 / 107).